The sequence spans 192 residues: uncharacterized protein (192 aa).

The N-terminal stretch at 1-18 (MNSKFILKYFILAFFLVS) is a signal peptide. Cys-19 is lipidated: N-palmitoyl cysteine. Cys-19 carries S-diacylglycerol cysteine lipidation.

Its subcellular location is the cell membrane. This is an uncharacterized protein from Borreliella burgdorferi (strain ATCC 35210 / DSM 4680 / CIP 102532 / B31) (Borrelia burgdorferi).